Consider the following 147-residue polypeptide: MELNNIEIQKIIPHRYPFLLVDKMVEVELGKRGVGIKNVTANEPFFQGHFPGNPIMPGVLMTEALAQVAALICMGLEENKGKLGVFTGIDKCKFRRQVVPGDVLRLEIEMTALRRGIGKAEGKAYVGEELACSASLTFALINPNTDK.

H49 is a catalytic residue.

It belongs to the thioester dehydratase family. FabZ subfamily.

It is found in the cytoplasm. It carries out the reaction a (3R)-hydroxyacyl-[ACP] = a (2E)-enoyl-[ACP] + H2O. Involved in unsaturated fatty acids biosynthesis. Catalyzes the dehydration of short chain beta-hydroxyacyl-ACPs and long chain saturated and unsaturated beta-hydroxyacyl-ACPs. The chain is 3-hydroxyacyl-[acyl-carrier-protein] dehydratase FabZ from Alkaliphilus metalliredigens (strain QYMF).